We begin with the raw amino-acid sequence, 154 residues long: SsrA-binding protein (154 aa).

Belongs to the SmpB family.

It is found in the cytoplasm. Its function is as follows. Required for rescue of stalled ribosomes mediated by trans-translation. Binds to transfer-messenger RNA (tmRNA), required for stable association of tmRNA with ribosomes. tmRNA and SmpB together mimic tRNA shape, replacing the anticodon stem-loop with SmpB. tmRNA is encoded by the ssrA gene; the 2 termini fold to resemble tRNA(Ala) and it encodes a 'tag peptide', a short internal open reading frame. During trans-translation Ala-aminoacylated tmRNA acts like a tRNA, entering the A-site of stalled ribosomes, displacing the stalled mRNA. The ribosome then switches to translate the ORF on the tmRNA; the nascent peptide is terminated with the 'tag peptide' encoded by the tmRNA and targeted for degradation. The ribosome is freed to recommence translation, which seems to be the essential function of trans-translation. The protein is SsrA-binding protein of Enterococcus hirae (strain ATCC 9790 / DSM 20160 / JCM 8729 / LMG 6399 / NBRC 3181 / NCIMB 6459 / NCDO 1258 / NCTC 12367 / WDCM 00089 / R).